A 470-amino-acid polypeptide reads, in one-letter code: Uronate isomerase (470 aa).

Belongs to the metallo-dependent hydrolases superfamily. Uronate isomerase family.

The enzyme catalyses D-glucuronate = D-fructuronate. The catalysed reaction is aldehydo-D-galacturonate = keto-D-tagaturonate. The protein operates within carbohydrate metabolism; pentose and glucuronate interconversion. The sequence is that of Uronate isomerase from Serratia proteamaculans (strain 568).